A 445-amino-acid chain; its full sequence is Tubulin beta-3 chain (445 aa).

The MREI motif motif lies at 1-4 (MREI). Positions 11, 69, 138, 142, 143, 144, 204, and 226 each coordinate GTP. Residue Glu69 coordinates Mg(2+). The disordered stretch occupies residues 425 to 445 (YQDATAEEEGEFEEEAEEEAE). The segment covering 429–445 (TAEEEGEFEEEAEEEAE) has biased composition (acidic residues). 5-glutamyl polyglutamate is present on Glu438.

This sequence belongs to the tubulin family. As to quaternary structure, dimer of alpha and beta chains. A typical microtubule is a hollow water-filled tube with an outer diameter of 25 nm and an inner diameter of 15 nM. Alpha-beta heterodimers associate head-to-tail to form protofilaments running lengthwise along the microtubule wall with the beta-tubulin subunit facing the microtubule plus end conferring a structural polarity. Microtubules usually have 13 protofilaments but different protofilament numbers can be found in some organisms and specialized cells. It depends on Mg(2+) as a cofactor. In terms of processing, some glutamate residues at the C-terminus are polyglycylated, resulting in polyglycine chains on the gamma-carboxyl group. Glycylation is mainly limited to tubulin incorporated into axonemes (cilia and flagella) whereas glutamylation is prevalent in neuronal cells, centrioles, axonemes, and the mitotic spindle. Both modifications can coexist on the same protein on adjacent residues, and lowering polyglycylation levels increases polyglutamylation, and reciprocally. The precise function of polyglycylation is still unclear. Post-translationally, some glutamate residues at the C-terminus are polyglutamylated, resulting in polyglutamate chains on the gamma-carboxyl group. Polyglutamylation plays a key role in microtubule severing by spastin (SPAST). SPAST preferentially recognizes and acts on microtubules decorated with short polyglutamate tails: severing activity by SPAST increases as the number of glutamates per tubulin rises from one to eight, but decreases beyond this glutamylation threshold. As to expression, highly expressed in testis.

It is found in the cytoplasm. The protein localises to the cytoskeleton. In terms of biological role, tubulin is the major constituent of microtubules, a cylinder consisting of laterally associated linear protofilaments composed of alpha- and beta-tubulin heterodimers. Microtubules grow by the addition of GTP-tubulin dimers to the microtubule end, where a stabilizing cap forms. Below the cap, tubulin dimers are in GDP-bound state, owing to GTPase activity of alpha-tubulin. TUBB3 plays a role in dorsal root ganglion axon projection towards the spinal cord. This is Tubulin beta-3 chain from Gallus gallus (Chicken).